The primary structure comprises 349 residues: Bifunctional nitrilase/nitrile hydratase NIT4A (349 aa).

Positions 29–301 (VRATVVQAST…EALISADLDL (273 aa)) constitute a CN hydrolase domain. The active-site Proton acceptor is E69. K156 serves as the catalytic Proton donor. C190 acts as the Nucleophile in catalysis.

It belongs to the carbon-nitrogen hydrolase superfamily. Nitrilase family. As to expression, expressed in roots, stems, cotyledons, leaves and flowers.

Its subcellular location is the cell membrane. It catalyses the reaction a nitrile + 2 H2O = a carboxylate + NH4(+). The catalysed reaction is 3-cyano-L-alanine + 2 H2O = L-aspartate + NH4(+). The enzyme catalyses L-asparagine = 3-cyano-L-alanine + H2O. In terms of biological role, highly specific for beta-cyano-L-alanine (Ala(CN)). Low activity with 3-phenylpropionitrile (PPN). Not associated with auxin production but may be involved in cyanide detoxification. The protein is Bifunctional nitrilase/nitrile hydratase NIT4A (NIT4A) of Nicotiana tabacum (Common tobacco).